The following is a 432-amino-acid chain: Adenylosuccinate synthetase (432 aa).

Residues 13–19 (GDEGKGK) and 41–43 (GHT) each bind GTP. Asp14 (proton acceptor) is an active-site residue. The Mg(2+) site is built by Asp14 and Gly41. Residues 14–17 (DEGK), 39–42 (NAGH), Thr130, Arg144, Gln225, Thr240, and Arg304 each bind IMP. The Proton donor role is filled by His42. 300-306 (ATTGRSR) contributes to the substrate binding site. Residues Arg306, 332–334 (KLD), and 415–417 (STG) each bind GTP.

This sequence belongs to the adenylosuccinate synthetase family. As to quaternary structure, homodimer. The cofactor is Mg(2+).

Its subcellular location is the cytoplasm. It carries out the reaction IMP + L-aspartate + GTP = N(6)-(1,2-dicarboxyethyl)-AMP + GDP + phosphate + 2 H(+). Its pathway is purine metabolism; AMP biosynthesis via de novo pathway; AMP from IMP: step 1/2. Its function is as follows. Plays an important role in the de novo pathway of purine nucleotide biosynthesis. Catalyzes the first committed step in the biosynthesis of AMP from IMP. This chain is Adenylosuccinate synthetase, found in Yersinia pseudotuberculosis serotype O:1b (strain IP 31758).